Reading from the N-terminus, the 297-residue chain is D-alanine--D-alanine ligase (297 aa).

The ATP-grasp domain occupies 103 to 293 (KEILMHHRMP…FDSFVKSILE (191 aa)). Residue 129–180 (ISFPVAVKPSSGGSSIATFKVKSLEELENAYQQASKHGEVMIEQWVTGKEIT) coordinates ATP. 3 residues coordinate Mg(2+): Asp247, Glu260, and Asn262.

Belongs to the D-alanine--D-alanine ligase family. It depends on Mg(2+) as a cofactor. Mn(2+) serves as cofactor.

It is found in the cytoplasm. It carries out the reaction 2 D-alanine + ATP = D-alanyl-D-alanine + ADP + phosphate + H(+). It participates in cell wall biogenesis; peptidoglycan biosynthesis. Its function is as follows. Cell wall formation. The polypeptide is D-alanine--D-alanine ligase (Francisella philomiragia subsp. philomiragia (strain ATCC 25017 / CCUG 19701 / FSC 153 / O#319-036)).